Here is a 355-residue protein sequence, read N- to C-terminus: Cyclic nucleotide-gated potassium channel RHE_CH03180 (355 aa).

The Cytoplasmic portion of the chain corresponds to 1 to 12 (MSAVPFSKISTP). Residues 13–30 (LNALFATIGLLVVAALTT) traverse the membrane as a helical segment. Residues 31–38 (QGLTGQER) lie on the Periplasmic side of the membrane. Residues 39–61 (LVFELLLAAIWLAYVLQLSGTLL) form a helical membrane-spanning segment. Topologically, residues 62-73 (SRRRRLSGEMTA) are cytoplasmic. The helical transmembrane segment at 74 to 93 (LVIDLLAVLVPAAAFLFVGS) threads the bilayer. The chain crosses the membrane as a helical span at residues 94-111 (RDRDLYCAIWLLKPLRDS). The Cytoplasmic portion of the chain corresponds to 112-128 (TFFRLLAKVVANESRNL). A helical transmembrane segment spans residues 129–149 (LGVTSVFGIVLFGAALAGYII). At 150–160 (ERDVQPDKFGS) the chain is on the periplasmic side. Positions 161-179 (IPQAMWWAVVTLSTTGYGD) form an intramembrane region, pore-forming. Positions 174–179 (TTGYGD) match the Selectivity filter motif. Residues 180 to 184 (EIPQS) are Periplasmic-facing. A helical membrane pass occupies residues 185–209 (LAGRVLAGLVMMSGIGIFALWAGIL). The Cytoplasmic segment spans residues 210–355 (ATGFYEEVRR…LERRGGPPKE (146 aa)). 3',5'-cyclic AMP is bound by residues 297–298 (GE), 307–308 (RS), and R348.

This sequence belongs to the potassium channel family. As to quaternary structure, homotetramer.

It localises to the cell membrane. Cyclic nucleotide-regulated potassium channel activated by cAMP. The sequence is that of Cyclic nucleotide-gated potassium channel RHE_CH03180 from Rhizobium etli (strain ATCC 51251 / DSM 11541 / JCM 21823 / NBRC 15573 / CFN 42).